We begin with the raw amino-acid sequence, 182 residues long: Putative manganese efflux pump MntP 2 (182 aa).

The next 6 membrane-spanning stretches (helical) occupy residues 2–22 (IELT…SIAL), 37–57 (AGGF…YLGV), 63–83 (IGGI…LKMI), 104–123 (LLLL…LTLT), 127–149 (LPLW…GGVH), and 162–182 (AEYL…IEHS).

This sequence belongs to the MntP (TC 9.B.29) family.

Its subcellular location is the cell inner membrane. Its function is as follows. Probably functions as a manganese efflux pump. The protein is Putative manganese efflux pump MntP 2 of Wolinella succinogenes (strain ATCC 29543 / DSM 1740 / CCUG 13145 / JCM 31913 / LMG 7466 / NCTC 11488 / FDC 602W) (Vibrio succinogenes).